Reading from the N-terminus, the 1035-residue chain is Calcium-transporting ATPase 7, plasma membrane-type (1035 aa).

Residues 1 to 166 are Cytoplasmic-facing; sequence MECADYFIGS…KGFFRHVWDA (166 aa). The chain crosses the membrane as a helical span at residues 167 to 187; it reads LADVFLIVLLVCAAVSLAFGI. Topologically, residues 188–194 are extracellular; sequence KEHGIKD. Residues 195 to 215 traverse the membrane as a helical segment; sequence GWYDGVSIFLAVFLVAAVSAV. The Cytoplasmic portion of the chain corresponds to 216-348; that stretch reads SNHSQGKRFD…DPTPLQERLE (133 aa). A helical transmembrane segment spans residues 349 to 369; sequence GLTSSIGKVGIAVAVLVFAVL. The Extracellular portion of the chain corresponds to 370–395; the sequence is TARHFTGSTRDEQGNALFDKRNVTFN. N-linked (GlcNAc...) asparagine glycosylation is present at Asn-391. Residues 396–416 traverse the membrane as a helical segment; it reads AVFSGLVGIFQQAVTIIVVAI. The Cytoplasmic segment spans residues 417 to 818; that stretch reads PEGLPLAVTL…GRCVYNNIQK (402 aa). Asp-460 functions as the 4-aspartylphosphate intermediate in the catalytic mechanism. Mg(2+) contacts are provided by Asp-761 and Asp-765. Residues 819-839 form a helical membrane-spanning segment; that stretch reads FIQFQLTVNVAALVINFVSAV. Residues 840–845 lie on the Extracellular side of the membrane; the sequence is TTGRMP. A helical transmembrane segment spans residues 846-866; the sequence is LTTVQLLWVNLIMDTMGALAL. Residues 867–887 are Cytoplasmic-facing; sequence ATDTPTAGLMRRPPIGRAAPL. Residues 888-910 traverse the membrane as a helical segment; that stretch reads ISNAMWRNLAAQAAYQVAVLLAL. Topologically, residues 911–919 are extracellular; sequence QYRGFGGAG. Residues 920–940 traverse the membrane as a helical segment; it reads AGERANGTMIFNAFVLCQVFN. Residues 941 to 960 lie on the Cytoplasmic side of the membrane; that stretch reads EFNAREIERRNVFAGVHRNR. The chain crosses the membrane as a helical span at residues 961 to 981; that stretch reads MFLGIVAVTVALQVVMVELLT. Over 982–990 the chain is Extracellular; it reads KFAGTERLG. A helical transmembrane segment spans residues 991 to 1011; that stretch reads WGQWGACVGIAAVSWPIGWAV. Over 1012 to 1035 the chain is Cytoplasmic; sequence KCIPVPERPFHEIITARRRRRRST.

The protein belongs to the cation transport ATPase (P-type) (TC 3.A.3) family. Type IIB subfamily.

It is found in the golgi apparatus membrane. It carries out the reaction Ca(2+)(in) + ATP + H2O = Ca(2+)(out) + ADP + phosphate + H(+). Activated by calmodulin. Functionally, this magnesium-dependent enzyme catalyzes the hydrolysis of ATP coupled with the translocation of calcium from the cytosol out of the cell, into the endoplasmic reticulum, or into organelles. Involved in salt stress tolerance. In Oryza sativa subsp. japonica (Rice), this protein is Calcium-transporting ATPase 7, plasma membrane-type.